The chain runs to 473 residues: Zinc finger and SCAN domain-containing protein 21 (473 aa).

Lysine 27 is covalently cross-linked (Glycyl lysine isopeptide (Lys-Gly) (interchain with G-Cter in SUMO2)). The 83-residue stretch at 45-127 (RQRFRQFGYH…TLLEDLEREL (83 aa)) folds into the SCAN box domain. Positions 127-169 (LDEPGHQVSTPPNEQKPVWEKISSSGTAKESPSSMQPQPLETS) are disordered. A compositionally biased stretch (polar residues) spans 148 to 167 (ISSSGTAKESPSSMQPQPLE). Glycyl lysine isopeptide (Lys-Gly) (interchain with G-Cter in SUMO2) cross-links involve residues lysine 221 and lysine 232. Residues 244-272 (LENEKGTKPPLQEAGSKKGRESVPTKPTP) are disordered. Residues 258–272 (GSKKGRESVPTKPTP) show a composition bias toward basic and acidic residues. C2H2-type zinc fingers lie at residues 277–299 (YICAECGKAFSNSSNLTKHRRTH), 305–327 (YVCTKCGKAFSHSSNLTLHYRTH), 333–354 (YDCKCGKAFGQSSDLLKHQRMH), 360–382 (YQCKDCGKAFSGKGSLIRHYRIH), 388–410 (YQCNECGKSFSQHAGLSSHQRLH), 416–438 (YKCKECGKAFNHSSNFNKHHRIH), and 444–466 (YWCHHCGKTFCSKSNLSKHQRVH). Residue lysine 349 forms a Glycyl lysine isopeptide (Lys-Gly) (interchain with G-Cter in SUMO2) linkage.

Belongs to the krueppel C2H2-type zinc-finger protein family.

It localises to the nucleus. Functionally, strong transcriptional activator. Plays an important role in spermatogenesis; essential for the progression of meiotic prophase I in spermatocytes. The polypeptide is Zinc finger and SCAN domain-containing protein 21 (ZSCAN21) (Homo sapiens (Human)).